The primary structure comprises 357 residues: UDP-N-acetylglucosamine--N-acetylmuramyl-(pentapeptide) pyrophosphoryl-undecaprenol N-acetylglucosamine transferase (357 aa).

UDP-N-acetyl-alpha-D-glucosamine-binding positions include 14–16, Arg168, Ser198, and Gln292; that span reads TAG.

The protein belongs to the glycosyltransferase 28 family. MurG subfamily.

The protein localises to the cell membrane. It catalyses the reaction di-trans,octa-cis-undecaprenyl diphospho-N-acetyl-alpha-D-muramoyl-L-alanyl-D-glutamyl-meso-2,6-diaminopimeloyl-D-alanyl-D-alanine + UDP-N-acetyl-alpha-D-glucosamine = di-trans,octa-cis-undecaprenyl diphospho-[N-acetyl-alpha-D-glucosaminyl-(1-&gt;4)]-N-acetyl-alpha-D-muramoyl-L-alanyl-D-glutamyl-meso-2,6-diaminopimeloyl-D-alanyl-D-alanine + UDP + H(+). The protein operates within cell wall biogenesis; peptidoglycan biosynthesis. In terms of biological role, cell wall formation. Catalyzes the transfer of a GlcNAc subunit on undecaprenyl-pyrophosphoryl-MurNAc-pentapeptide (lipid intermediate I) to form undecaprenyl-pyrophosphoryl-MurNAc-(pentapeptide)GlcNAc (lipid intermediate II). This Oceanobacillus iheyensis (strain DSM 14371 / CIP 107618 / JCM 11309 / KCTC 3954 / HTE831) protein is UDP-N-acetylglucosamine--N-acetylmuramyl-(pentapeptide) pyrophosphoryl-undecaprenol N-acetylglucosamine transferase.